Consider the following 173-residue polypeptide: Large ribosomal subunit protein uL16 (173 aa).

Belongs to the universal ribosomal protein uL16 family.

This Methanococcus aeolicus (strain ATCC BAA-1280 / DSM 17508 / OCM 812 / Nankai-3) protein is Large ribosomal subunit protein uL16.